Here is a 136-residue protein sequence, read N- to C-terminus: Transmembrane protein 203 (136 aa).

Residues 1–51 are interaction with STING1; sequence MLFSLRELVQWLGFATFEIFVHLLALLVFSVLLALRVDGLVPGLSWWNVFV. 4 helical membrane passes run 14–34, 50–72, 81–101, and 112–132; these read FATF…VLLA, FVPF…VRLF, VLRL…EMLL, and LWFG…MIRA. Residues 52–136 are required for the lysosomal localization of the STING-TMEM203 complex; sequence PFFAADGLST…LLMIRACRVN (85 aa).

In terms of assembly, homodimer. Interacts with ATP2A2, ITPR3 and STIM1. Interacts with STING1 (via transmembrane domain). As to expression, increased expression seen in T-lymphocytes from patients with systemic lupus erythematosus (SLE).

The protein localises to the endoplasmic reticulum membrane. It localises to the endoplasmic reticulum-Golgi intermediate compartment. It is found in the lysosome membrane. Its function is as follows. Involved in the regulation of cellular calcium homeotasis. Required for spermatogenesis. Acts as a regulator of STING-mediated inflammatory signaling in macrophages. Forms a complex with STING, promoting the activity of TBK1 kinase and the transcription factor IRF3, leading to activation of type I interferon expression. The polypeptide is Transmembrane protein 203 (TMEM203) (Homo sapiens (Human)).